We begin with the raw amino-acid sequence, 884 residues long: Schlafen family member 5 (884 aa).

An ATP-binding site is contributed by 574 to 581 (GLPGSGKT).

This sequence belongs to the Schlafen family. Subgroup III subfamily.

Its function is as follows. May have a role in hematopoietic cell differentiation. The chain is Schlafen family member 5 (Slfn5) from Mus musculus (Mouse).